The sequence spans 200 residues: Adenylate kinase (200 aa).

10–15 provides a ligand contact to ATP; it reads GAGKGT. Residues 30–59 form an NMP region; sequence STGDMLRAAVAAGTPVGLEAKSIMESGGLV. AMP is bound by residues T31, R36, 57 to 59, 85 to 88, and Q92; these read GLV and GFPR. The interval 126–142 is LID; the sequence is KRAEETAARGQPVRKDD. ATP is bound at residue R127. AMP is bound by residues R139 and R150. Position 178 (K178) interacts with ATP.

It belongs to the adenylate kinase family. In terms of assembly, monomer.

It localises to the cytoplasm. It carries out the reaction AMP + ATP = 2 ADP. Its pathway is purine metabolism; AMP biosynthesis via salvage pathway; AMP from ADP: step 1/1. In terms of biological role, catalyzes the reversible transfer of the terminal phosphate group between ATP and AMP. Plays an important role in cellular energy homeostasis and in adenine nucleotide metabolism. The sequence is that of Adenylate kinase from Methylorubrum populi (strain ATCC BAA-705 / NCIMB 13946 / BJ001) (Methylobacterium populi).